The sequence spans 85 residues: Elongation factor 1-beta (85 aa).

Belongs to the EF-1-beta/EF-1-delta family.

Its function is as follows. Promotes the exchange of GDP for GTP in EF-1-alpha/GDP, thus allowing the regeneration of EF-1-alpha/GTP that could then be used to form the ternary complex EF-1-alpha/GTP/AAtRNA. This Methanoregula boonei (strain DSM 21154 / JCM 14090 / 6A8) protein is Elongation factor 1-beta.